A 601-amino-acid polypeptide reads, in one-letter code: Elongation factor 4 (601 aa).

Residues 6–188 (SRTRNFSIIA…DIVKNVPPPK (183 aa)) enclose the tr-type G domain. GTP-binding positions include 18–23 (DHGKST) and 135–138 (NKID).

Belongs to the TRAFAC class translation factor GTPase superfamily. Classic translation factor GTPase family. LepA subfamily.

Its subcellular location is the cell membrane. It catalyses the reaction GTP + H2O = GDP + phosphate + H(+). Its function is as follows. Required for accurate and efficient protein synthesis under certain stress conditions. May act as a fidelity factor of the translation reaction, by catalyzing a one-codon backward translocation of tRNAs on improperly translocated ribosomes. Back-translocation proceeds from a post-translocation (POST) complex to a pre-translocation (PRE) complex, thus giving elongation factor G a second chance to translocate the tRNAs correctly. Binds to ribosomes in a GTP-dependent manner. This is Elongation factor 4 from Clostridioides difficile (strain 630) (Peptoclostridium difficile).